The following is a 352-amino-acid chain: Histidinol-phosphate aminotransferase (352 aa).

At K208 the chain carries N6-(pyridoxal phosphate)lysine.

This sequence belongs to the class-II pyridoxal-phosphate-dependent aminotransferase family. Histidinol-phosphate aminotransferase subfamily. In terms of assembly, homodimer. The cofactor is pyridoxal 5'-phosphate.

The enzyme catalyses L-histidinol phosphate + 2-oxoglutarate = 3-(imidazol-4-yl)-2-oxopropyl phosphate + L-glutamate. It functions in the pathway amino-acid biosynthesis; L-histidine biosynthesis; L-histidine from 5-phospho-alpha-D-ribose 1-diphosphate: step 7/9. The protein is Histidinol-phosphate aminotransferase of Streptococcus sanguinis (strain SK36).